The chain runs to 230 residues: 2,3-bisphosphoglycerate-dependent phosphoglycerate mutase 2 (230 aa).

Substrate-binding positions include 8–15 (RHGQSEWN), 21–22 (TG), Arg-60, 87–90 (ERHY), Lys-98, 114–115 (RR), and 183–184 (GN). The active-site Tele-phosphohistidine intermediate is the His-9. Catalysis depends on Glu-87, which acts as the Proton donor/acceptor.

The protein belongs to the phosphoglycerate mutase family. BPG-dependent PGAM subfamily.

It carries out the reaction (2R)-2-phosphoglycerate = (2R)-3-phosphoglycerate. It participates in carbohydrate degradation; glycolysis; pyruvate from D-glyceraldehyde 3-phosphate: step 3/5. Functionally, catalyzes the interconversion of 2-phosphoglycerate and 3-phosphoglycerate. The sequence is that of 2,3-bisphosphoglycerate-dependent phosphoglycerate mutase 2 from Lactiplantibacillus plantarum (strain ATCC BAA-793 / NCIMB 8826 / WCFS1) (Lactobacillus plantarum).